Here is a 332-residue protein sequence, read N- to C-terminus: tRNA U34 carboxymethyltransferase (332 aa).

Residues K91, W105, K110, G130, 152–154 (DPS), 181–182 (IE), M196, Y200, and R315 each bind carboxy-S-adenosyl-L-methionine.

This sequence belongs to the class I-like SAM-binding methyltransferase superfamily. CmoB family. Homotetramer.

The enzyme catalyses carboxy-S-adenosyl-L-methionine + 5-hydroxyuridine(34) in tRNA = 5-carboxymethoxyuridine(34) in tRNA + S-adenosyl-L-homocysteine + H(+). Functionally, catalyzes carboxymethyl transfer from carboxy-S-adenosyl-L-methionine (Cx-SAM) to 5-hydroxyuridine (ho5U) to form 5-carboxymethoxyuridine (cmo5U) at position 34 in tRNAs. The chain is tRNA U34 carboxymethyltransferase from Shewanella putrefaciens (strain CN-32 / ATCC BAA-453).